Reading from the N-terminus, the 858-residue chain is Leucine--tRNA ligase (858 aa).

Residues 42-52 carry the 'HIGH' region motif; the sequence is PYPSGRLHMGH. The short motif at 618-622 is the 'KMSKS' region element; it reads KMSKS. Lysine 621 serves as a coordination point for ATP.

Belongs to the class-I aminoacyl-tRNA synthetase family.

It localises to the cytoplasm. It catalyses the reaction tRNA(Leu) + L-leucine + ATP = L-leucyl-tRNA(Leu) + AMP + diphosphate. The sequence is that of Leucine--tRNA ligase from Aliivibrio salmonicida (strain LFI1238) (Vibrio salmonicida (strain LFI1238)).